Reading from the N-terminus, the 418-residue chain is Adenylosuccinate synthetase 2 (418 aa).

GTP is bound by residues 12–18 (GDEGKGR) and 40–42 (GHT). Residue aspartate 13 is the Proton acceptor of the active site. Mg(2+) is bound by residues aspartate 13 and glycine 40. Residues 13-16 (DEGK), 38-41 (NAGH), threonine 127, lysine 141, threonine 239, and arginine 301 contribute to the IMP site. Histidine 41 serves as the catalytic Proton donor. Substrate is bound at residue 297-303 (AVTGRPR). Residues arginine 303, 329 to 331 (KID), and 407 to 409 (SVG) each bind GTP.

This sequence belongs to the adenylosuccinate synthetase family. In terms of assembly, homodimer. The cofactor is Mg(2+).

It is found in the cytoplasm. It carries out the reaction IMP + L-aspartate + GTP = N(6)-(1,2-dicarboxyethyl)-AMP + GDP + phosphate + 2 H(+). Its pathway is purine metabolism; AMP biosynthesis via de novo pathway; AMP from IMP: step 1/2. Functionally, plays an important role in the de novo pathway of purine nucleotide biosynthesis. Catalyzes the first committed step in the biosynthesis of AMP from IMP. The sequence is that of Adenylosuccinate synthetase 2 from Pseudoalteromonas translucida (strain TAC 125).